The following is a 177-amino-acid chain: Large ribosomal subunit protein bL19 (177 aa).

Belongs to the bacterial ribosomal protein bL19 family.

Its function is as follows. This protein is located at the 30S-50S ribosomal subunit interface and may play a role in the structure and function of the aminoacyl-tRNA binding site. This chain is Large ribosomal subunit protein bL19, found in Sinorhizobium medicae (strain WSM419) (Ensifer medicae).